Consider the following 90-residue polypeptide: RNA-binding protein Hfq (90 aa).

A Sm domain is found at 9–69; sequence DRFLNHLRVN…ISTIIPSSYV (61 aa).

The protein belongs to the Hfq family. As to quaternary structure, homohexamer.

Functionally, RNA chaperone that binds small regulatory RNA (sRNAs) and mRNAs to facilitate mRNA translational regulation in response to envelope stress, environmental stress and changes in metabolite concentrations. Also binds with high specificity to tRNAs. This Thermotoga sp. (strain RQ2) protein is RNA-binding protein Hfq.